Reading from the N-terminus, the 223-residue chain is Peptidyl-tRNA hydrolase (223 aa).

Residue Tyr16 participates in tRNA binding. His21 functions as the Proton acceptor in the catalytic mechanism. Positions 67, 69, and 113 each coordinate tRNA.

It belongs to the PTH family. As to quaternary structure, monomer.

The protein resides in the cytoplasm. The catalysed reaction is an N-acyl-L-alpha-aminoacyl-tRNA + H2O = an N-acyl-L-amino acid + a tRNA + H(+). Functionally, hydrolyzes ribosome-free peptidyl-tRNAs (with 1 or more amino acids incorporated), which drop off the ribosome during protein synthesis, or as a result of ribosome stalling. Its function is as follows. Catalyzes the release of premature peptidyl moieties from peptidyl-tRNA molecules trapped in stalled 50S ribosomal subunits, and thus maintains levels of free tRNAs and 50S ribosomes. The sequence is that of Peptidyl-tRNA hydrolase from Helicobacter hepaticus (strain ATCC 51449 / 3B1).